The primary structure comprises 225 residues: MDIRPNHTIYINNMNDKIKKEELKRSLYALFSQFGHVVDIVALKTMKMRGQAFVIFKELGSSTNALRQLQGFPFYGKPMRIQYAKTDSDIISKMRGTFADKEKKKEKKKAKTVEQTATTTNKKPGQGTPNSANTQGNSTPNPQVPDYPPNYILFLNNLPEETNEMMLSMLFNQFPGFKEVRLVPGRHDIAFVEFENDGQAGAARDALQGFKITPSHAMKITYAKK.

Residues 7 to 86 (HTIYINNMND…KPMRIQYAKT (80 aa)) enclose the RRM 1 domain. A disordered region spans residues 99 to 145 (ADKEKKKEKKKAKTVEQTATTTNKKPGQGTPNSANTQGNSTPNPQVP). Lys111 is modified (N6-acetyllysine; alternate). A Glycyl lysine isopeptide (Lys-Gly) (interchain with G-Cter in SUMO2); alternate cross-link involves residue Lys111. The segment covering 113-123 (VEQTATTTNKK) has biased composition (low complexity). Positions 127–141 (GTPNSANTQGNSTPN) are enriched in polar residues. Residue Tyr151 is modified to Phosphotyrosine. The RRM 2 domain occupies 151 to 225 (YILFLNNLPE…HAMKITYAKK (75 aa)).

It belongs to the RRM U1 A/B'' family. In terms of assembly, identified in the spliceosome B complex. Identified in the spliceosome C complex. Present in a spliceosome complex assembled in vitro, and composed of SNRPB2, HPRP8BP and CRNKL1. Contributes to the binding of stem loop IV of U2 snRNA with SNRPP1.

Its subcellular location is the nucleus. Involved in pre-mRNA splicing as component of the spliceosome. Associated with sn-RNP U2, where it contributes to the binding of stem loop IV of U2 snRNA. The chain is U2 small nuclear ribonucleoprotein B'' (SNRPB2) from Homo sapiens (Human).